The primary structure comprises 321 residues: D-alanine--D-alanine ligase (321 aa).

One can recognise an ATP-grasp domain in the interval 121-315 (RIWFLTNNIN…FTNLIEEIIK (195 aa)). ATP is bound at residue 147–199 (PMKRPYVIKPLTQGSSIGVEVIFAEDDFNFADYDFPYGDQVIIEQYIKGRELQ). Positions 268, 282, and 284 each coordinate Mg(2+).

This sequence belongs to the D-alanine--D-alanine ligase family. Mg(2+) serves as cofactor. The cofactor is Mn(2+).

It is found in the cytoplasm. The enzyme catalyses 2 D-alanine + ATP = D-alanyl-D-alanine + ADP + phosphate + H(+). It functions in the pathway cell wall biogenesis; peptidoglycan biosynthesis. In terms of biological role, cell wall formation. This is D-alanine--D-alanine ligase from Rickettsia africae (strain ESF-5).